We begin with the raw amino-acid sequence, 405 residues long: Argininosuccinate synthase (405 aa).

An ATP-binding site is contributed by 11-19; sequence AYSGGLDTS. Residue Y90 coordinates L-citrulline. G119 provides a ligand contact to ATP. L-aspartate is bound by residues T121, N125, and D126. N125 lines the L-citrulline pocket. 5 residues coordinate L-citrulline: R129, S178, S187, E263, and Y275.

This sequence belongs to the argininosuccinate synthase family. Type 1 subfamily. In terms of assembly, homotetramer.

It is found in the cytoplasm. The enzyme catalyses L-citrulline + L-aspartate + ATP = 2-(N(omega)-L-arginino)succinate + AMP + diphosphate + H(+). It participates in amino-acid biosynthesis; L-arginine biosynthesis; L-arginine from L-ornithine and carbamoyl phosphate: step 2/3. This is Argininosuccinate synthase from Legionella pneumophila subsp. pneumophila (strain Philadelphia 1 / ATCC 33152 / DSM 7513).